A 208-amino-acid chain; its full sequence is Ribosomal RNA large subunit methyltransferase E (208 aa).

G63, W65, D83, D99, and D124 together coordinate S-adenosyl-L-methionine. The Proton acceptor role is filled by K164.

This sequence belongs to the class I-like SAM-binding methyltransferase superfamily. RNA methyltransferase RlmE family.

The protein resides in the cytoplasm. It catalyses the reaction uridine(2552) in 23S rRNA + S-adenosyl-L-methionine = 2'-O-methyluridine(2552) in 23S rRNA + S-adenosyl-L-homocysteine + H(+). Specifically methylates the uridine in position 2552 of 23S rRNA at the 2'-O position of the ribose in the fully assembled 50S ribosomal subunit. The chain is Ribosomal RNA large subunit methyltransferase E from Hamiltonella defensa subsp. Acyrthosiphon pisum (strain 5AT).